Consider the following 258-residue polypeptide: Spectinomycin 9-adenylyltransferase (258 aa).

It carries out the reaction spectinomycin + ATP = 9-O-adenylylspectinomycin + diphosphate. Mediates bacterial resistance to spectinomycin, is probably a spectinomycin 9-adenylyltransferase. This Campylobacter jejuni protein is Spectinomycin 9-adenylyltransferase.